The sequence spans 260 residues: LIM and SH3 domain protein 1 (260 aa).

An N-acetylmethionine modification is found at methionine 1. The 52-residue stretch at 5–56 (CARCCKIVYPTEKVNCLDKFWHKACFHCETCKMTLNMKNYKGYEKKPYCNAH) folds into the LIM zinc-binding domain. Lysine 42 is modified (N6-acetyllysine). 2 Nebulin repeats span residues 61–95 (SFTMVADTPENLRLKQQSELQSQVRYKEEFEKNKG) and 97–131 (GFSVVADTPELQRIKKTQDQISNIKYHEEFEKSRM). Threonine 68 carries the post-translational modification Phosphothreonine. Lysine 75 bears the N6-methyllysine mark. The residue at position 99 (serine 99) is a Phosphoserine. Residue threonine 104 is modified to Phosphothreonine. N6-succinyllysine is present on lysine 112. 2 positions are modified to phosphoserine: serine 118 and serine 134. The interval 123–204 (HEEFEKSRMG…QRSAPGGGGK (82 aa)) is disordered. Basic and acidic residues predominate over residues 140 to 155 (ECERRDPQESSYRRPQ). Over residues 171–180 (QQPQQQPAAQ) the composition is skewed to low complexity. An SH3 domain is found at 201 to 260 (GGGKRYRAVYDYSAADEDEVSFQDGDTIVNVQQIDDGWMYGTVERTGDTGMLPANYVEAI).

As to quaternary structure, interacts with F-actin. Interacts with ANKRD54. Interacts with KBTBD10. Post-translationally, phosphorylated.

The protein resides in the cytoplasm. It is found in the cell cortex. It localises to the cytoskeleton. Functionally, plays an important role in the regulation of dynamic actin-based, cytoskeletal activities. Agonist-dependent changes in LASP1 phosphorylation may also serve to regulate actin-associated ion transport activities, not only in the parietal cell but also in certain other F-actin-rich secretory epithelial cell types. The chain is LIM and SH3 domain protein 1 (LASP1) from Bos taurus (Bovine).